The sequence spans 512 residues: Calcium-dependent protein kinase 18 (512 aa).

Positions 1–25 (MGLCSSSSARRDAGTPGGGNGAGNK) are disordered. Gly2 carries the N-myristoyl glycine lipid modification. Residues 52–312 (YALGKLLGHG…AAQALSHEWV (261 aa)) form the Protein kinase domain. Residues 58–66 (LGHGQFGYT) and Lys81 each bind ATP. Residue Asp178 is the Proton acceptor of the active site. The autoinhibitory domain stretch occupies residues 318-348 (ASDIPLDISVLHNMRQFVKYSRFKQFALRAL). EF-hand domains are found at residues 355-390 (EELSDLRDQFNAIDVDKNGTISLEELKQALAKDVPW), 392-427 (LKGPRVLEIVEAIDSNTDGLVDFEEFVAATLHVHQL), 434-469 (KWKSLSQAAFDKFDVDGDGYITSDELRMQTGLKGSI), and 472-499 (LLEEADIDRDGKISLDEFRRLLKTASMS). Residues Asp368, Asp370, Asn372, Thr374, Glu379, Asp405, Asn407, Asp409, Glu416, Asp447, Asp449, Asp451, Tyr453, Glu458, Asp477, Asp479, Asp481, Lys483, and Glu488 each contribute to the Ca(2+) site.

This sequence belongs to the protein kinase superfamily. Ser/Thr protein kinase family. CDPK subfamily. In terms of assembly, interacts with MPK5. In terms of processing, autophosphorylated. Phosphorylated by MPK5.

Its subcellular location is the cell membrane. The enzyme catalyses L-seryl-[protein] + ATP = O-phospho-L-seryl-[protein] + ADP + H(+). The catalysed reaction is L-threonyl-[protein] + ATP = O-phospho-L-threonyl-[protein] + ADP + H(+). Activated by calcium. Autophosphorylation may play an important role in the regulation of the kinase activity. Functionally, may play a role in signal transduction pathways that involve calcium as a second messenger. Functions upstream of MPK5 in a signaling pathway that represses defense gene expression and negatively regulates resistance to rice blast fungus. Phosphorylates MPK5 at Thr-14 and Thr-32 and activates MPK5 independently of MAP kinase kinase (MKK) phosphorylation. May be involved in arbuscular mycorrhizal presymbiotic phase signaling. Phosphorylates the elicitor-responsive protein ERG1 in vitro. Phosphorylation is calcium-dependent. The chain is Calcium-dependent protein kinase 18 from Oryza sativa subsp. japonica (Rice).